Reading from the N-terminus, the 261-residue chain is Trifolitoxin immunity protein (261 aa).

In terms of biological role, required for TFX resistance. The chain is Trifolitoxin immunity protein (tfxG) from Rhizobium leguminosarum bv. trifolii.